The sequence spans 345 residues: Acetylserotonin O-methyltransferase (345 aa).

Residues Tyr-147, Trp-164, Asp-210, 235 to 237 (GDF), and Arg-252 each bind S-adenosyl-L-methionine. Catalysis depends on His-255, which acts as the Proton donor/acceptor. Substrate contacts are provided by Asp-256, Asn-302, and Gln-306.

It belongs to the class I-like SAM-binding methyltransferase superfamily. Cation-independent O-methyltransferase family. As to quaternary structure, homodimer. Highly expressed in pineal gland. In the retina, 10- to 100-fold lower expression compared to pineal gland, if any.

The catalysed reaction is N-acetylserotonin + S-adenosyl-L-methionine = melatonin + S-adenosyl-L-homocysteine + H(+). The protein operates within aromatic compound metabolism; melatonin biosynthesis; melatonin from serotonin: step 1/2. In terms of biological role, catalyzes the transfer of a methyl group onto N-acetylserotonin, producing melatonin (N-acetyl-5-methoxytryptamine). This chain is Acetylserotonin O-methyltransferase (ASMT), found in Macaca mulatta (Rhesus macaque).